A 229-amino-acid polypeptide reads, in one-letter code: Purine nucleoside phosphorylase BB_0467 (229 aa).

Zn(2+) contacts are provided by H55, C91, and H108.

The protein belongs to the purine nucleoside phosphorylase YfiH/LACC1 family. Homodimer. The cofactor is Cu(2+). Zn(2+) is required as a cofactor.

The enzyme catalyses adenosine + phosphate = alpha-D-ribose 1-phosphate + adenine. The catalysed reaction is S-methyl-5'-thioadenosine + phosphate = 5-(methylsulfanyl)-alpha-D-ribose 1-phosphate + adenine. It carries out the reaction inosine + phosphate = alpha-D-ribose 1-phosphate + hypoxanthine. It catalyses the reaction adenosine + H2O + H(+) = inosine + NH4(+). Its function is as follows. Purine nucleoside enzyme that catalyzes the phosphorolysis of adenosine and inosine nucleosides, yielding D-ribose 1-phosphate and the respective free bases, adenine and hypoxanthine. Also catalyzes the phosphorolysis of S-methyl-5'-thioadenosine into adenine and S-methyl-5-thio-alpha-D-ribose 1-phosphate. Also has adenosine deaminase activity. This is Purine nucleoside phosphorylase BB_0467 from Borreliella burgdorferi (strain ATCC 35210 / DSM 4680 / CIP 102532 / B31) (Borrelia burgdorferi).